A 246-amino-acid polypeptide reads, in one-letter code: MKTFIFLALLGAAVAFPVDDDDKIVGGYTCGANTVPYQVSLNSGYHFCGGSLINSQWVVSAAHCYKSGIQVRLGEDNINVVEGNEQFISASKSIVHPSYNSNTLNNDIMLIKLKSAASLNSRVASISLPTSCASAGTQCLISGWGNTKSSGTSYPDVLKCLKAPILSDSSCKSAYPGQITSNMFCAGYLEGGKDSCQGDSGGPVVCSGKLQGIVSWGSGCAQKNKPGVYTKVCNYVSWIKQTIASN.

An N-terminal signal peptide occupies residues 1 to 17 (MKTFIFLALLGAAVAFP). The propeptide at 18–23 (VDDDDK) is activation peptide. The 221-residue stretch at 24–244 (IVGGYTCGAN…YVSWIKQTIA (221 aa)) folds into the Peptidase S1 domain. Disulfide bonds link C30–C160, C48–C64, C132–C233, C139–C206, C171–C185, and C196–C220. H63 acts as the Charge relay system in catalysis. The Ca(2+) site is built by E75, N77, V80, and E85. The Charge relay system role is filled by D107. Residues 194–195 (DS), 197–198 (QG), and S200 each bind substrate. Residue S200 is the Charge relay system of the active site.

Belongs to the peptidase S1 family. As to quaternary structure, interacts with SERPINA1. Requires Ca(2+) as cofactor. In terms of processing, autocatalytic cleavage after Lys-23 leads to beta-trypsin by releasing a terminal hexapeptide. Subsequent cleavage after Lys-148 leads to alpha-trypsin. Further cleavage after Lys-193 yields pseudotrypsin. A cleavage may also occur after Arg-122. Post-translationally, not sulfated on tyrosine residue(s). Synthesized in the acinar cells of the pancreas.

It localises to the secreted. The protein resides in the extracellular space. The catalysed reaction is Preferential cleavage: Arg-|-Xaa, Lys-|-Xaa.. Is inhibited by scorpion cyclotide trypsin inhibitor TopI1. The chain is Serine protease 1 (PRSS1) from Bos taurus (Bovine).